A 304-amino-acid chain; its full sequence is UDP-3-O-acyl-N-acetylglucosamine deacetylase (304 aa).

Zn(2+) contacts are provided by H79, H238, and D242. The Proton donor role is filled by H265.

This sequence belongs to the LpxC family. The cofactor is Zn(2+).

It catalyses the reaction a UDP-3-O-[(3R)-3-hydroxyacyl]-N-acetyl-alpha-D-glucosamine + H2O = a UDP-3-O-[(3R)-3-hydroxyacyl]-alpha-D-glucosamine + acetate. It functions in the pathway glycolipid biosynthesis; lipid IV(A) biosynthesis; lipid IV(A) from (3R)-3-hydroxytetradecanoyl-[acyl-carrier-protein] and UDP-N-acetyl-alpha-D-glucosamine: step 2/6. In terms of biological role, catalyzes the hydrolysis of UDP-3-O-myristoyl-N-acetylglucosamine to form UDP-3-O-myristoylglucosamine and acetate, the committed step in lipid A biosynthesis. This is UDP-3-O-acyl-N-acetylglucosamine deacetylase from Photobacterium profundum (strain SS9).